Reading from the N-terminus, the 812-residue chain is Protein let-653 (812 aa).

The N-terminal stretch at 1–21 (MRHPLISLLLLIAFYSTSSEA) is a signal peptide. 2 consecutive Apple domains span residues 26–116 (CNSF…WKYC) and 123–209 (CSGE…ENNC). Cystine bridges form between cysteine 26-cysteine 116, cysteine 53-cysteine 88, cysteine 57-cysteine 72, cysteine 123-cysteine 209, cysteine 154-cysteine 178, and cysteine 158-cysteine 166. 3 N-linked (GlcNAc...) asparagine glycosylation sites follow: asparagine 172, asparagine 211, and asparagine 272. Positions 221–725 (ECRDNGISVS…NTCDDVEGCD (505 aa)) constitute a ZP domain. 2 stretches are compositionally biased toward low complexity: residues 375–449 (QVTT…STTT) and 496–584 (PTTT…PASS). 2 disordered regions span residues 375 to 461 (QVTT…STIM) and 494 to 584 (DVPT…PASS). N-linked (GlcNAc...) asparagine glycosylation is present at asparagine 771.

Post-translationally, cleaved at the C-terminal domain. In terms of tissue distribution, expressed in external cuticle-producing epithelial cells including the epidermis, vulva, rectum, excretory duct and excretory pore.

It localises to the apical cell membrane. It is found in the secreted. The protein resides in the extracellular space. Required for epithelial tube development and shaping. Involved in the morphogenesis and function of the three unicellular tubes of the excretory system, the canal cell, the duct cell and the pore cell. Also plays a role in cuticle development, alae formation and shaping of the vulval lumen. Required for larval development. The protein is Protein let-653 of Caenorhabditis elegans.